Here is a 183-residue protein sequence, read N- to C-terminus: Ubiquitin-conjugating enzyme E2-21 kDa (183 aa).

Residues 17-179 enclose the UBC core domain; that stretch reads TCMSRIVKEY…VKYFLAERER (163 aa). C115 functions as the Glycyl thioester intermediate in the catalytic mechanism.

It belongs to the ubiquitin-conjugating enzyme family.

It localises to the peroxisome. The catalysed reaction is S-ubiquitinyl-[E1 ubiquitin-activating enzyme]-L-cysteine + [E2 ubiquitin-conjugating enzyme]-L-cysteine = [E1 ubiquitin-activating enzyme]-L-cysteine + S-ubiquitinyl-[E2 ubiquitin-conjugating enzyme]-L-cysteine.. Its pathway is protein modification; protein ubiquitination. Its function is as follows. Catalyzes the covalent attachment of ubiquitin to other proteins. Essential for peroxisome biogenesis. Required for UBC4-independent ubiquitination of PEX5. The sequence is that of Ubiquitin-conjugating enzyme E2-21 kDa (PEX4) from Saccharomyces cerevisiae (strain ATCC 204508 / S288c) (Baker's yeast).